Here is a 213-residue protein sequence, read N- to C-terminus: MKPYQRQFIEFALNKQVLKFGEFTLKSGRKSPYFFNAGLFNTGRDLALLGRFYAEALVDSGIEFDLLFGPAYKGIPIATTTAVALAEHHDKDLPYCFNRKEAKDHGEGGSLVGSALQGRVMLVDDVITAGTAIRESMEIIQAHRATLAGVLISLDRQERGRGEISAIQEVERDYGCKVISIITLKDLIAYLEEKPDMAEHLAAVRAYREEFGV.

A 5-phospho-alpha-D-ribose 1-diphosphate-binding site is contributed by K26. Position 34 to 35 (34 to 35 (FF)) interacts with orotate. 5-phospho-alpha-D-ribose 1-diphosphate-binding positions include 72–73 (YK), R99, K100, K103, H105, and 124–132 (DDVITAGTA). Residues T128 and R156 each coordinate orotate.

This sequence belongs to the purine/pyrimidine phosphoribosyltransferase family. PyrE subfamily. As to quaternary structure, homodimer. Mg(2+) is required as a cofactor.

The catalysed reaction is orotidine 5'-phosphate + diphosphate = orotate + 5-phospho-alpha-D-ribose 1-diphosphate. It participates in pyrimidine metabolism; UMP biosynthesis via de novo pathway; UMP from orotate: step 1/2. Functionally, catalyzes the transfer of a ribosyl phosphate group from 5-phosphoribose 1-diphosphate to orotate, leading to the formation of orotidine monophosphate (OMP). This is Orotate phosphoribosyltransferase from Salmonella typhi.